Reading from the N-terminus, the 576-residue chain is Arginine--tRNA ligase (576 aa).

The 'HIGH' region motif lies at 128–136; the sequence is PTGPMHIGH.

Belongs to the class-I aminoacyl-tRNA synthetase family. In terms of assembly, monomer.

The protein resides in the cytoplasm. It catalyses the reaction tRNA(Arg) + L-arginine + ATP = L-arginyl-tRNA(Arg) + AMP + diphosphate. The polypeptide is Arginine--tRNA ligase (Rickettsia conorii (strain ATCC VR-613 / Malish 7)).